Here is a 147-residue protein sequence, read N- to C-terminus: 6,7-dimethyl-8-ribityllumazine synthase (147 aa).

5-amino-6-(D-ribitylamino)uracil is bound by residues F16, 48–50, and 73–75; these read TFD and AVI. 78-79 contacts (2S)-2-hydroxy-3-oxobutyl phosphate; that stretch reads DT. The active-site Proton donor is the H81. L106 contacts 5-amino-6-(D-ribitylamino)uracil. Position 121 (R121) interacts with (2S)-2-hydroxy-3-oxobutyl phosphate.

This sequence belongs to the DMRL synthase family.

The enzyme catalyses (2S)-2-hydroxy-3-oxobutyl phosphate + 5-amino-6-(D-ribitylamino)uracil = 6,7-dimethyl-8-(1-D-ribityl)lumazine + phosphate + 2 H2O + H(+). The protein operates within cofactor biosynthesis; riboflavin biosynthesis; riboflavin from 2-hydroxy-3-oxobutyl phosphate and 5-amino-6-(D-ribitylamino)uracil: step 1/2. Its function is as follows. Catalyzes the formation of 6,7-dimethyl-8-ribityllumazine by condensation of 5-amino-6-(D-ribitylamino)uracil with 3,4-dihydroxy-2-butanone 4-phosphate. This is the penultimate step in the biosynthesis of riboflavin. This chain is 6,7-dimethyl-8-ribityllumazine synthase, found in Aeropyrum pernix (strain ATCC 700893 / DSM 11879 / JCM 9820 / NBRC 100138 / K1).